Reading from the N-terminus, the 429-residue chain is Enolase (429 aa).

Residue Q162 coordinates (2R)-2-phosphoglycerate. E204 serves as the catalytic Proton donor. 3 residues coordinate Mg(2+): D241, E288, and D315. Residues K340, R369, S370, and K391 each contribute to the (2R)-2-phosphoglycerate site. The active-site Proton acceptor is the K340.

The protein belongs to the enolase family. Mg(2+) serves as cofactor.

The protein resides in the cytoplasm. It localises to the secreted. The protein localises to the cell surface. It carries out the reaction (2R)-2-phosphoglycerate = phosphoenolpyruvate + H2O. It functions in the pathway carbohydrate degradation; glycolysis; pyruvate from D-glyceraldehyde 3-phosphate: step 4/5. Catalyzes the reversible conversion of 2-phosphoglycerate (2-PG) into phosphoenolpyruvate (PEP). It is essential for the degradation of carbohydrates via glycolysis. The chain is Enolase from Christiangramia forsetii (strain DSM 17595 / CGMCC 1.15422 / KT0803) (Gramella forsetii).